Consider the following 201-residue polypeptide: Sorting nexin-10 (201 aa).

The tract at residues Glu8–Leu125 is required for interaction with ATP6V1D. One can recognise a PX domain in the interval Phe10 to Ser127. Positions 53, 79, and 94 each coordinate a 1,2-diacyl-sn-glycero-3-phospho-(1D-myo-inositol-3-phosphate). The tract at residues Phe156–Ser201 is disordered.

The protein belongs to the sorting nexin family. In terms of assembly, interacts with ATP6V1D; may play a role in ciliogenesis.

The protein localises to the cytoplasm. The protein resides in the endosome membrane. Its subcellular location is the cytoskeleton. It localises to the microtubule organizing center. It is found in the centrosome. Its function is as follows. Probable phosphoinositide-binding protein involved in protein sorting and membrane trafficking in endosomes. Plays a role in cilium biogenesis through regulation of the transport and the localization of proteins to the cilium. Required for the localization to the cilium of V-ATPase subunit ATP6V1D and ATP6V0D1, and RAB8A. Involved in osteoclast differentiation and therefore bone resorption. The protein is Sorting nexin-10 (SNX10) of Homo sapiens (Human).